Consider the following 258-residue polypeptide: (S)-hydroxynitrile lyase (258 aa).

An AB hydrolase-1 domain is found at 5–242; that stretch reads HFVLIHTICH…GGDHKLQLTK (238 aa). Residues T11 and S80 each coordinate 2-hydroxy-2-methylpropanenitrile. The acetone site is built by T11, S80, and C81. S80 functions as the Proton donor/acceptor in the catalytic mechanism. Catalysis depends on H236, which acts as the Proton donor/acceptor.

The protein belongs to the AB hydrolase superfamily. Hydroxynitrile lyase family. In terms of assembly, homotetramer.

It carries out the reaction a monosubstituted aliphatic (S)-hydroxynitrile = an aldehyde + hydrogen cyanide. The enzyme catalyses a disubstituted aliphatic (S)-hydroxynitrile = a ketone + hydrogen cyanide. It catalyses the reaction an aromatic (S)-hydroxynitrile = an aromatic aldehyde + hydrogen cyanide. The catalysed reaction is 2-hydroxy-2-methylpropanenitrile = acetone + hydrogen cyanide. It carries out the reaction butan-2-one + hydrogen cyanide = 2-hydroxy-2-methylbutanenitrile. The enzyme catalyses pentan-2-one + hydrogen cyanide = (2S)-2-hydroxy-2-methylpentanenitrile. It catalyses the reaction hexan-2-one + hydrogen cyanide = (2S)-2-hydroxy-2-methylhexanenitrile. The catalysed reaction is heptan-2-one + hydrogen cyanide = (2S)-2-hydroxy-2-methylheptanenitrile. It carries out the reaction 4-methylpentan-2-one + hydrogen cyanide = (2S)-2-hydroxy-2,4-dimethylpentanenitrile. The enzyme catalyses 3,3-dimethylbutan-2-one + hydrogen cyanide = (2S)-2-hydroxy-2-methyl-3,3-dimethylbutanenitrile. It catalyses the reaction acetophenone + hydrogen cyanide = (2S)-2-hydroxy-2-phenylpropanenitrile. The catalysed reaction is propanal + hydrogen cyanide = (2S)-2-hydroxybutanenitrile. It carries out the reaction pentanal + hydrogen cyanide = (2S)-2-hydroxyhexanenitrile. The enzyme catalyses 2-methylpropanal + hydrogen cyanide = (2S)-2-hydroxy-3-methylbutanenitrile. It catalyses the reaction 2,2-dimethylpropanal + hydrogen cyanide = (2S)-2-hydroxy-3,3-dimethylbutanenitrile. The catalysed reaction is acrolein + hydrogen cyanide = (2S)-2-hydroxybut-3-enenitrile. It carries out the reaction (2E)-but-2-enal + hydrogen cyanide = (2S,3E)-2-hydroxypent-3-enenitrile. The enzyme catalyses (E)-hex-2-enal + hydrogen cyanide = (2S,3E)-2-hydroxyhept-3-enenitrile. It catalyses the reaction cyclohexanecarbaldehyde + hydrogen cyanide = (2S)-2-cyclohexyl-2-hydroxyacetonitrile. The catalysed reaction is benzaldehyde + hydrogen cyanide = (S)-mandelonitrile. It carries out the reaction 4-methoxybenzaldehyde + hydrogen cyanide = (2S)-2-hydroxy-2-(4-methoxyphenyl)acetonitrile. The enzyme catalyses piperonal + hydrogen cyanide = (2S)-2-(2H-1,3-benzodioxol-5-yl)-2-hydroxyacetonitrile. It catalyses the reaction formylthiophene + hydrogen cyanide = (2R)-2-hydroxy-2-(thiophen-2-yl)acetonitrile. The catalysed reaction is 3-formylthiophene + hydrogen cyanide = (2S)-2-hydroxy-2-(thiophen-3-yl)acetonitrile. It carries out the reaction furan-3-carbaldehyde + hydrogen cyanide = (2S)-2-(furan-3-yl)-2-hydroxyacetonitrile. Its function is as follows. Involved in cyanogenesis, the release of HCN from cyanogenic glycosides in injured tissues; the release of toxic HCN is believed to play a central role in the defense mechanism of plants against herbivores and microbial attack. Decomposes a variety of cyanohydrins (alpha-hydroxynitriles) into HCN and the corresponding aldehydes or ketones; two natural substrates are 2-hydroxy-2-methylpropanenitrile (acetone cyanohydrin) and 2-hydroxy-2-methylbutanenitrile (2-butanone cyanohydrin), but in vitro can also act on 2-hydroxy-2-methylpentanenitrile (2-pentanone cyanohydrin) and mandelonitrile. Is also able to catalyze the reverse reaction in vitro, leading to the stereospecific synthesis of aliphatic, aromatic, and heterocyclic cyanohydrins, important intermediates in the production of various agrochemicals or pharmaceuticals. This chain is (S)-hydroxynitrile lyase, found in Manihot esculenta (Cassava).